A 257-amino-acid polypeptide reads, in one-letter code: Imidazole glycerol phosphate synthase subunit HisF (257 aa).

Active-site residues include Asp12 and Asp131.

It belongs to the HisA/HisF family. Heterodimer of HisH and HisF.

It is found in the cytoplasm. It carries out the reaction 5-[(5-phospho-1-deoxy-D-ribulos-1-ylimino)methylamino]-1-(5-phospho-beta-D-ribosyl)imidazole-4-carboxamide + L-glutamine = D-erythro-1-(imidazol-4-yl)glycerol 3-phosphate + 5-amino-1-(5-phospho-beta-D-ribosyl)imidazole-4-carboxamide + L-glutamate + H(+). Its pathway is amino-acid biosynthesis; L-histidine biosynthesis; L-histidine from 5-phospho-alpha-D-ribose 1-diphosphate: step 5/9. Its function is as follows. IGPS catalyzes the conversion of PRFAR and glutamine to IGP, AICAR and glutamate. The HisF subunit catalyzes the cyclization activity that produces IGP and AICAR from PRFAR using the ammonia provided by the HisH subunit. The polypeptide is Imidazole glycerol phosphate synthase subunit HisF (Paraburkholderia phymatum (strain DSM 17167 / CIP 108236 / LMG 21445 / STM815) (Burkholderia phymatum)).